The following is a 166-amino-acid chain: uncharacterized protein (166 aa).

It to M.jannaschii MJ0992.

This is an uncharacterized protein from Methanocaldococcus jannaschii (strain ATCC 43067 / DSM 2661 / JAL-1 / JCM 10045 / NBRC 100440) (Methanococcus jannaschii).